Consider the following 226-residue polypeptide: Uracil-DNA glycosylase (226 aa).

The active-site Proton acceptor is D64.

Belongs to the uracil-DNA glycosylase (UDG) superfamily. UNG family.

It is found in the cytoplasm. It catalyses the reaction Hydrolyzes single-stranded DNA or mismatched double-stranded DNA and polynucleotides, releasing free uracil.. Its function is as follows. Excises uracil residues from the DNA which can arise as a result of misincorporation of dUMP residues by DNA polymerase or due to deamination of cytosine. This is Uracil-DNA glycosylase from Proteus mirabilis (strain HI4320).